A 93-amino-acid polypeptide reads, in one-letter code: Protein FptB (93 aa).

The first 25 residues, 1–25 (MPRQSGFGWAWRVPLALAGSLAAAT), serve as a signal peptide directing secretion. Transmembrane regions (helical) follow at residues 44 to 64 (LYAGLFGALGVGLLLLVGGLL) and 71 to 91 (FAWRLGGSLLVLGLALWLLAG).

It is found in the cell membrane. In terms of biological role, may play some role in transport of Fe(3+)-pyochelin. The sequence is that of Protein FptB (fptB) from Pseudomonas aeruginosa (strain ATCC 15692 / DSM 22644 / CIP 104116 / JCM 14847 / LMG 12228 / 1C / PRS 101 / PAO1).